The chain runs to 290 residues: Dual-specificity RNA pseudouridine synthase RluF (290 aa).

The S4 RNA-binding domain maps to 7–72 (VRLNKYISES…EAEDLVLIAL (66 aa)). Interaction with RNA stretches follow at residues 105–108 (RLDK) and 187–190 (RQIR). Catalysis depends on aspartate 107, which acts as the Nucleophile. The interval 243-290 (VKPKAKAKPKTAGIKRPVVKMEKTAEKGGRPASNGKRFTSPGRKKKGR) is disordered. Basic and acidic residues predominate over residues 261-271 (VKMEKTAEKGG).

The protein belongs to the pseudouridine synthase RsuA family. As to quaternary structure, monomer.

The catalysed reaction is uridine(2604) in 23S rRNA = pseudouridine(2604) in 23S rRNA. It catalyses the reaction uridine(35) in tRNA(Tyr) = pseudouridine(35) in tRNA(Tyr). Its function is as follows. Dual specificity enzyme that catalyzes the synthesis of pseudouridine from uracil-2604 in 23S ribosomal RNA and from uracil-35 in the anticodon of tRNA(Tyr). Can, to a small extent, also react with uracil-2605. In Escherichia coli (strain K12), this protein is Dual-specificity RNA pseudouridine synthase RluF (rluF).